Here is a 284-residue protein sequence, read N- to C-terminus: 2-dehydro-3-deoxyphosphooctonate aldolase (284 aa).

This sequence belongs to the KdsA family.

It is found in the cytoplasm. It catalyses the reaction D-arabinose 5-phosphate + phosphoenolpyruvate + H2O = 3-deoxy-alpha-D-manno-2-octulosonate-8-phosphate + phosphate. Its pathway is carbohydrate biosynthesis; 3-deoxy-D-manno-octulosonate biosynthesis; 3-deoxy-D-manno-octulosonate from D-ribulose 5-phosphate: step 2/3. It participates in bacterial outer membrane biogenesis; lipopolysaccharide biosynthesis. The protein is 2-dehydro-3-deoxyphosphooctonate aldolase of Aliivibrio salmonicida (strain LFI1238) (Vibrio salmonicida (strain LFI1238)).